A 141-amino-acid polypeptide reads, in one-letter code: Light-regulated protein 1, chloroplastic (141 aa).

The transit peptide at 1–41 (MQGALFIKPTILLPLPSSVSSPKLTFLLPHATKASRLSSLR) directs the protein to the chloroplast. Low complexity predominate over residues 35-51 (SRLSSLRSNNSSSSSSL). A disordered region spans residues 35-58 (SRLSSLRSNNSSSSSSLTSDPNTV). The tract at residues 58 to 132 (VDYNSSILSV…ACDDLGGEFC (75 aa)) is 2 X 15 AA approximate repeats. Repeat copies occupy residues 67–81 (VFPAEACEVISGYAC) and 118–132 (VFREEACDDLGGEFC).

Component of high molecular weight thylakoid LFNRs-containing protein complexes containing LIR1, LFNR1, LFNR2, TIC62 and TROL proteins. Interacts directly with LFNR1 and LFNR2; LIR1 increases the affinity of LFNR1 and LFNR2 for TIC62 and subsequent thylakoid relocalization. In terms of processing, may form interchain disulfide bonds with LFNR1 and LFNR2.

Its subcellular location is the plastid. The protein localises to the chloroplast thylakoid membrane. It is found in the chloroplast envelope. It localises to the chloroplast stroma. Thylakoid-determinant subunit of high molecular weight LFNRs-containing protein complexes. In Arabidopsis thaliana (Mouse-ear cress), this protein is Light-regulated protein 1, chloroplastic.